A 232-amino-acid polypeptide reads, in one-letter code: MTRPQAILTDIEGTTSSISFVKDVLFPYARRAMPAYVREHGGHPQVRHWLNQVADEIGEDVPDEVLITTLQTWIDEDRKHTALKALQGMIWEDGYRTADFSAHIYADAAIQLQAWHAEGIPLYVYSSGSVPAQKLFFAHSDAGDLSGLVSDWFDTEVGPKRESSSYRRIAERIGVPAPEILFLSDVIEELDAAKRAGMRTALLDRLEDYPTPRSADDVGSHQRVESFTQLVL.

This sequence belongs to the HAD-like hydrolase superfamily. MasA/MtnC family. As to quaternary structure, monomer. Requires Mg(2+) as cofactor.

It carries out the reaction 5-methylsulfanyl-2,3-dioxopentyl phosphate + H2O = 1,2-dihydroxy-5-(methylsulfanyl)pent-1-en-3-one + phosphate. The protein operates within amino-acid biosynthesis; L-methionine biosynthesis via salvage pathway; L-methionine from S-methyl-5-thio-alpha-D-ribose 1-phosphate: step 3/6. It functions in the pathway amino-acid biosynthesis; L-methionine biosynthesis via salvage pathway; L-methionine from S-methyl-5-thio-alpha-D-ribose 1-phosphate: step 4/6. Bifunctional enzyme that catalyzes the enolization of 2,3-diketo-5-methylthiopentyl-1-phosphate (DK-MTP-1-P) into the intermediate 2-hydroxy-3-keto-5-methylthiopentenyl-1-phosphate (HK-MTPenyl-1-P), which is then dephosphorylated to form the acireductone 1,2-dihydroxy-3-keto-5-methylthiopentene (DHK-MTPene). In Xanthomonas campestris pv. campestris (strain B100), this protein is Enolase-phosphatase E1.